Here is a 9159-residue protein sequence, read N- to C-terminus: Halomucin (9159 aa).

The N-terminal stretch at 1 to 30 (MSQTAKPIFAVVVALIVLISGVAFIGSVSA) is a signal peptide. C-type lectin domains follow at residues 644–776 (TTGN…YLVE) and 929–1060 (YDGH…VEYG). Positions 1310-1332 (QPQTVNDPDAVSTRNNNVGSNGL) are enriched in polar residues. Residues 1310–1351 (QPQTVNDPDAVSTRNNNVGSNGLDSKIEDDQNNGADGNPHGT) form a disordered region. The interval 1756 to 3380 (VGGLIGESSG…GFNGEHVGGL (1625 aa)) is V-G-G-L motif-rich region. Disordered stretches follow at residues 3484–3514 (GATAQSDATGSGTPGGATGYGSVGDTTPAPQ), 4878–4912 (ESYWDKGATDKSDATGSDTPATVSGYGSVGDTTPA), 6570–6589 (TDSATGSSVGGLIGSQSSGQ), 7047–7097 (TPTV…GINT), 7660–7702 (ATDS…NPGG), 7888–7923 (IDGDGLADDNEATGVPTDNDDDNDGIPDDEDQEPAL), 8212–8237 (STQQKRVGPLVSEDPSTVSWPSGAAD), and 8369–8614 (DSTA…GSST). A compositionally biased stretch (gly residues) spans 3495–3505 (GTPGGATGYGS). Over residues 4880–4890 (YWDKGATDKSD) the composition is skewed to basic and acidic residues. Composition is skewed to polar residues over residues 7048–7057 (PTVTINSSSD) and 7068–7078 (GEDSTSSNESS). A compositionally biased stretch (acidic residues) spans 7079 to 7092 (DGTESDQGDPEDDI). A compositionally biased stretch (polar residues) spans 7681–7698 (VTGSTPTFVSSGTVTTPE). A Cadherin domain is found at 7686–7793 (PTFVSSGTVT…ITDVDEQPTG (108 aa)). Composition is skewed to acidic residues over residues 7888 to 7898 (IDGDGLADDNE) and 7905 to 7920 (DNDDDNDGIPDDEDQE). Residues 8378–8390 (ALEDDSSNQDSGD) are compositionally biased toward acidic residues. 2 stretches are compositionally biased toward low complexity: residues 8391 to 8529 (DSSN…SSQN) and 8538 to 8548 (SAAAVGAESGS). Gly residues-rich tracts occupy residues 8549-8566 (EMGGETGGESQAGGGDGS) and 8574-8608 (AGGGSSGGSSSGDSGGSSSGNSGGSSSGNSGGSSS).

Probably glycosylated with sugar containing sialic acid. This may further contribute to its overall negative charge, thereby creating an aqueous shield covering the cells.

It is found in the secreted. May protect the organism from desiccation stress. May also contribute to the rigidity and maintenance of the unique square cell morphology of H.walsbyi. This chain is Halomucin (hmu), found in Haloquadratum walsbyi (strain DSM 16790 / HBSQ001).